Consider the following 344-residue polypeptide: DNA-directed RNA polymerase subunit alpha (344 aa).

Residues 1-238 (MKVIKTAPLI…KQLGVFGERP (238 aa)) are alpha N-terminal domain (alpha-NTD). Residues 254-344 (AKDLSAKIES…EKLEDKGGND (91 aa)) are alpha C-terminal domain (alpha-CTD).

The protein belongs to the RNA polymerase alpha chain family. Homodimer. The RNAP catalytic core consists of 2 alpha, 1 beta, 1 beta' and 1 omega subunit. When a sigma factor is associated with the core the holoenzyme is formed, which can initiate transcription.

It catalyses the reaction RNA(n) + a ribonucleoside 5'-triphosphate = RNA(n+1) + diphosphate. In terms of biological role, DNA-dependent RNA polymerase catalyzes the transcription of DNA into RNA using the four ribonucleoside triphosphates as substrates. The chain is DNA-directed RNA polymerase subunit alpha from Helicobacter pylori (strain J99 / ATCC 700824) (Campylobacter pylori J99).